The sequence spans 151 residues: Conidium-specific protein (151 aa).

Residues 1 to 72 (MAKPHCSSRS…FSGDPDSEVE (72 aa)) form a disordered region. The segment covering 48-60 (RKDNSADKGDTLR) has biased composition (basic and acidic residues).

This is Conidium-specific protein (SpoC1-C1D) from Emericella nidulans (strain FGSC A4 / ATCC 38163 / CBS 112.46 / NRRL 194 / M139) (Aspergillus nidulans).